Reading from the N-terminus, the 404-residue chain is GTPase Obg (404 aa).

One can recognise an Obg domain in the interval 1 to 159 (MKFIDEARIE…RALRLELKVL (159 aa)). Residues 22-43 (SFRREKFIPRGGPDGGDGGRGG) form a disordered region. The span at 33–43 (GPDGGDGGRGG) shows a compositional bias: gly residues. The 175-residue stretch at 160–334 (ADVGLLGMPN…LVFAIQDFLD (175 aa)) folds into the OBG-type G domain. Residues 166–173 (GMPNAGKS), 191–195 (FTTLA), 213–216 (DIPG), 284–287 (NKLD), and 315–317 (SAL) each bind GTP. Ser-173 and Thr-193 together coordinate Mg(2+). A disordered region spans residues 373-404 (LLAEGETGTGDDGRDGNENDPADEQDTNRPNH).

The protein belongs to the TRAFAC class OBG-HflX-like GTPase superfamily. OBG GTPase family. As to quaternary structure, monomer. The cofactor is Mg(2+).

The protein resides in the cytoplasm. An essential GTPase which binds GTP, GDP and possibly (p)ppGpp with moderate affinity, with high nucleotide exchange rates and a fairly low GTP hydrolysis rate. Plays a role in control of the cell cycle, stress response, ribosome biogenesis and in those bacteria that undergo differentiation, in morphogenesis control. This is GTPase Obg from Aromatoleum aromaticum (strain DSM 19018 / LMG 30748 / EbN1) (Azoarcus sp. (strain EbN1)).